The chain runs to 403 residues: Peroxisomal membrane protein PEX13 (403 aa).

The segment covering 1-11 (MASQPPPPPKP) has biased composition (pro residues). Residues 1–69 (MASQPPPPPK…SQQTGGNNVN (69 aa)) form a disordered region. Residues 1 to 134 (MASQPPPPPK…SSRGAFQSIE (134 aa)) are Peroxisomal matrix-facing. Positions 59 to 69 (PSQQTGGNNVN) are enriched in polar residues. A helical transmembrane segment spans residues 135–155 (SIVHAFASVSMMMDATFSAVY). The segment at 145-233 (MMMDATFSAV…EDQANNSAKS (89 aa)) is targeting to peroxisomes. Topologically, residues 156 to 174 (NSFRAVLDVANHFSRLKIH) are cytoplasmic. A helical membrane pass occupies residues 175–192 (FTKVFSAFALVRTIRYLY). The interaction with PEX19 stretch occupies residues 175–196 (FTKVFSAFALVRTIRYLYRRLQ). The Peroxisomal matrix segment spans residues 193–233 (RRLQWMMGLRRGSENEDLWAESEGTVACLGAEDQANNSAKS). The chain crosses the membrane as a helical span at residues 234-254 (WPIFLFFAVILGGPYLIWKLL). Over 255 to 403 (STHSDEVTDS…TGKNGDKQDL (149 aa)) the chain is Cytoplasmic. In terms of domain architecture, SH3 spans 272 to 336 (DDHVVARAEY…PANYVKILGK (65 aa)). Disordered stretches follow at residues 341 to 364 (KTVE…VKGV) and 381 to 403 (FVET…KQDL). The segment covering 344–364 (ESSTMPKQQQSFTNPTSVKGV) has biased composition (polar residues).

The protein belongs to the peroxin-13 family. Interacts (via SH3 domain) with PEX14 (via SH3-binding motif); forming the PEX13-PEX14 docking complex. Interacts with PEX19.

The protein localises to the peroxisome membrane. Component of the PEX13-PEX14 docking complex, a translocon channel that specifically mediates the import of peroxisomal cargo proteins bound to PEX5 receptor. The PEX13-PEX14 docking complex forms a large import pore which can be opened to a diameter of about 9 nm. Mechanistically, PEX5 receptor along with cargo proteins associates with the PEX14 subunit of the PEX13-PEX14 docking complex in the cytosol, leading to the insertion of the receptor into the organelle membrane with the concomitant translocation of the cargo into the peroxisome matrix. Involved in the import of PTS1- and PTS2-type containing proteins. This chain is Peroxisomal membrane protein PEX13, found in Rattus norvegicus (Rat).